Here is a 349-residue protein sequence, read N- to C-terminus: N-acetyltaurine hydrolase (349 aa).

6 residues coordinate a divalent metal cation: histidine 26, histidine 28, glutamate 169, histidine 201, histidine 230, and aspartate 298.

It belongs to the metallo-dependent hydrolases superfamily. Phosphotriesterase family. The cofactor is a divalent metal cation.

It localises to the cytoplasm. The protein localises to the cytosol. It catalyses the reaction N-acetyltaurine + H2O = taurine + acetate. It carries out the reaction N-propanoyltaurine + H2O = propanoate + taurine. The enzyme catalyses N-acetyl-L-methionine + H2O = L-methionine + acetate. The catalysed reaction is N-acetyl-L-isoleucine + H2O = L-isoleucine + acetate. It catalyses the reaction N-acetyl-L-leucine + H2O = L-leucine + acetate. It carries out the reaction N-acetyl-L-valine + H2O = L-valine + acetate. Its function is as follows. N-acetyltaurine hydrolase that regulates feeding by catalyzing the hydrolysis of N-acetyltaurine into taurine and acetate. N-acetyltaurine has anorexigenic and anti-obesity effects that are dependent on GFRAL receptor and GDF15. PTER also acts on other N-acetyl amino acids (Met, Ile, Leu, Val) and N-propionyltaurine, but at lower rates. The sequence is that of N-acetyltaurine hydrolase from Pongo abelii (Sumatran orangutan).